Reading from the N-terminus, the 415-residue chain is MAMRLSSAAVALALLLAATALEDVARGQDTERIEGSAGDVLEDDPVGRLKVYVYELPTKYNKKMVAKDSRCLSHMFAAEIFMHRFLLSSAIRTLNPEEADWFYTPVYTTCDLTPWGHPLPFKSPRIMRSAIQFISSHWPYWNRTDGADHFFVVPHDFGACFHYQEEKAIERGILPLLRRATLVQTFGQKDHVCLKEGSITIPPYAPPQKMKTHLVPPETPRSIFVYFRGLFYDTANDPEGGYYARGARASVWENFKNNPLFDISTDHPPTYYEDMQRSIFCLCPLGWAPWSPRLVEAVVFGCIPVIIADDIVLPFADAIPWDEIGVFVAEDDVPKLDTILTSIPMDVILRKQRLLANPSMKQAMLFPQPAQPGDAFHQILNGLGRKLPHPKSVYLDPGQKVLNWTQGPVGDLKPW.

At 1–4 (MAMR) the chain is on the cytoplasmic side. The helical; Signal-anchor for type II membrane protein transmembrane segment at 5–25 (LSSAAVALALLLAATALEDVA) threads the bilayer. Residues 26-415 (RGQDTERIEG…QGPVGDLKPW (390 aa)) lie on the Lumenal side of the membrane. 2 N-linked (GlcNAc...) asparagine glycosylation sites follow: Asn142 and Asn403.

Belongs to the glycosyltransferase 47 family.

It localises to the golgi apparatus membrane. In terms of biological role, involved in the synthesis of glucuronoxylan hemicellulose in secondary cell walls. The sequence is that of Probable glucuronosyltransferase Os01g0926600 from Oryza sativa subsp. japonica (Rice).